The primary structure comprises 268 residues: Membrane lipoprotein TpN32 (268 aa).

The signal sequence occupies residues 1–23 (MKGKTVSAALVGKLIALSVGVVA). The N-palmitoyl cysteine moiety is linked to residue C24. The S-diacylglycerol cysteine moiety is linked to residue C24.

This sequence belongs to the NlpA lipoprotein family.

The protein resides in the cell membrane. The polypeptide is Membrane lipoprotein TpN32 (tpn32) (Treponema pallidum (strain Nichols)).